Reading from the N-terminus, the 466-residue chain is Glutamate decarboxylase alpha (466 aa).

2 residues coordinate substrate: Thr-62 and Asn-83. Pyridoxal 5'-phosphate contacts are provided by residues 126 to 127 (SS), Thr-212, and His-275. Lys-276 carries the post-translational modification N6-(pyridoxal phosphate)lysine.

The protein belongs to the group II decarboxylase family. In terms of assembly, homohexamer. The cofactor is pyridoxal 5'-phosphate.

It catalyses the reaction L-glutamate + H(+) = 4-aminobutanoate + CO2. Its function is as follows. Converts glutamate to gamma-aminobutyrate (GABA), consuming one intracellular proton in the reaction. The gad system helps to maintain a near-neutral intracellular pH when cells are exposed to extremely acidic conditions. The ability to survive transit through the acidic conditions of the stomach is essential for successful colonization of the mammalian host by commensal and pathogenic bacteria. This is Glutamate decarboxylase alpha (gadA) from Shigella flexneri.